Reading from the N-terminus, the 451-residue chain is 3-phosphoshikimate 1-carboxyvinyltransferase (451 aa).

Positions 30, 31, and 35 each coordinate 3-phosphoshikimate. A phosphoenolpyruvate-binding site is contributed by K30. Phosphoenolpyruvate contacts are provided by G103 and R131. S176, Q178, D329, and K356 together coordinate 3-phosphoshikimate. Q178 serves as a coordination point for phosphoenolpyruvate. D329 serves as the catalytic Proton acceptor. Positions 360 and 404 each coordinate phosphoenolpyruvate.

Belongs to the EPSP synthase family. As to quaternary structure, monomer.

The protein localises to the cytoplasm. The catalysed reaction is 3-phosphoshikimate + phosphoenolpyruvate = 5-O-(1-carboxyvinyl)-3-phosphoshikimate + phosphate. The protein operates within metabolic intermediate biosynthesis; chorismate biosynthesis; chorismate from D-erythrose 4-phosphate and phosphoenolpyruvate: step 6/7. Catalyzes the transfer of the enolpyruvyl moiety of phosphoenolpyruvate (PEP) to the 5-hydroxyl of shikimate-3-phosphate (S3P) to produce enolpyruvyl shikimate-3-phosphate and inorganic phosphate. The sequence is that of 3-phosphoshikimate 1-carboxyvinyltransferase from Parvibaculum lavamentivorans (strain DS-1 / DSM 13023 / NCIMB 13966).